The sequence spans 318 residues: Putative 2-hydroxyacid dehydrogenase SSP0606 (318 aa).

NAD(+) is bound by residues 156–157 (EI), 235–237 (ASR), and D261. The active site involves R237. E266 is a catalytic residue. H284 serves as the catalytic Proton donor. 284-287 (HIGN) is an NAD(+) binding site.

It belongs to the D-isomer specific 2-hydroxyacid dehydrogenase family.

This chain is Putative 2-hydroxyacid dehydrogenase SSP0606, found in Staphylococcus saprophyticus subsp. saprophyticus (strain ATCC 15305 / DSM 20229 / NCIMB 8711 / NCTC 7292 / S-41).